Consider the following 515-residue polypeptide: Glucose-6-phosphate 1-dehydrogenase X (515 aa).

At Ala2 the chain carries N-acetylalanine. Residues 38 to 45 (GASGDLAK), Arg72, Tyr147, and Lys171 each bind NADP(+). D-glucose 6-phosphate contacts are provided by residues Lys171, 201–205 (HYLGK), Glu239, and Asp258. The active-site Proton acceptor is the His263. Arg357 contacts NADP(+). Lys360 and Arg365 together coordinate D-glucose 6-phosphate. NADP(+) contacts are provided by Lys366, Arg370, and Arg393. Residue Gln395 coordinates D-glucose 6-phosphate. NADP(+) contacts are provided by residues 401–403 (YTK), 421–423 (DLT), Arg487, and Tyr503. The residue at position 507 (Tyr507) is a Phosphotyrosine. Trp509 is an NADP(+) binding site.

Belongs to the glucose-6-phosphate dehydrogenase family. Homotetramer; dimer of dimers. Interacts with SIRT2; the interaction is enhanced by H(2)O(2) treatment. Forms a ternary complex with ALDOB and TP53; this interaction is direct. ALDOB stabilizes the complex inhibiting G6PD activity and keeping oxidative pentose phosphate metabolism in check. Post-translationally, acetylated by ELP3 at Lys-403; acetylation inhibits its homodimerization and enzyme activity. Deacetylated by SIRT2 at Lys-403; deacetylation stimulates its enzyme activity.

It is found in the cytoplasm. Its subcellular location is the cytosol. The protein resides in the membrane. It catalyses the reaction D-glucose 6-phosphate + NADP(+) = 6-phospho-D-glucono-1,5-lactone + NADPH + H(+). The protein operates within carbohydrate degradation; pentose phosphate pathway; D-ribulose 5-phosphate from D-glucose 6-phosphate (oxidative stage): step 1/3. In terms of biological role, catalyzes the rate-limiting step of the oxidative pentose-phosphate pathway, which represents a route for the dissimilation of carbohydrates besides glycolysis. The main function of this enzyme is to provide reducing power (NADPH) and pentose phosphates for fatty acid and nucleic acid synthesis. The chain is Glucose-6-phosphate 1-dehydrogenase X (G6pdx) from Mus musculus (Mouse).